A 70-amino-acid polypeptide reads, in one-letter code: Brevinin-1PLb (70 aa).

The N-terminal stretch at 1 to 22 (MFTTKKSMLLLFFLGTINLSLC) is a signal peptide. Positions 23 to 44 (EEERNAEEERRDEPDEMNVEVE) are excised as a propeptide. Cys64 and Cys70 are joined by a disulfide.

As to expression, expressed by the skin glands.

The protein localises to the secreted. Antimicrobial activity against the Gram-negative bacterium E.coli, the Gram-positive bacterium S.aureus and the yeast C.albicans. This chain is Brevinin-1PLb, found in Lithobates palustris (Pickerel frog).